The chain runs to 88 residues: Large ribosomal subunit protein bL31 (88 aa).

The tract at residues 67 to 88 is disordered; that stretch reads MGSVDNATSEKKSATDETSKES. The span at 74 to 88 shows a compositional bias: basic and acidic residues; the sequence is TSEKKSATDETSKES.

It belongs to the bacterial ribosomal protein bL31 family. Type A subfamily. As to quaternary structure, part of the 50S ribosomal subunit.

In terms of biological role, binds the 23S rRNA. The protein is Large ribosomal subunit protein bL31 of Synechococcus sp. (strain CC9311).